The sequence spans 1324 residues: Sal-like protein 1 (1324 aa).

Residues 1 to 42 (MSRRKQAKPQHFQSDPEVASLPRRDGDTEKGQPSRPTKSKDA) are disordered. Residues 22 to 42 (PRRDGDTEKGQPSRPTKSKDA) are compositionally biased toward basic and acidic residues. The segment at 43–65 (HVCGRCCAEFFELSDLLLHKKNC) adopts a C2H2-type 1; atypical zinc-finger fold. Disordered stretches follow at residues 77–102 (NPASPPETFSPSPPPDNPDEQMNDTV), 108–127 (VDCSDLSEHNGLDREESMEV), 132–172 (ANKS…TSAI), and 317–336 (PPIQLPQSSSGNTIIPSNSG). Residues 113–124 (LSEHNGLDREES) show a composition bias toward basic and acidic residues. Positions 135–158 (SGSGTSSGSHSSTAPSSSSSSSSS) are enriched in low complexity. The span at 321–336 (LPQSSSGNTIIPSNSG) shows a compositional bias: polar residues. Lys439 is covalently cross-linked (Glycyl lysine isopeptide (Lys-Gly) (interchain with G-Cter in SUMO2)). 2 C2H2-type zinc fingers span residues 449 to 471 (HKCRFCAKVFGSDSALQIHLRSH) and 477 to 499 (FKCNICGNRFSTKGNLKVHFQRH). The disordered stretch occupies residues 577-646 (PIPISHSATS…ASSSVLSSPA (70 aa)). 3 positions are modified to phosphoserine: Ser590, Ser593, and Ser595. A compositionally biased stretch (low complexity) spans 633 to 646 (SVPTASSSVLSSPA). Residues Lys673, Lys690, and Lys701 each participate in a glycyl lysine isopeptide (Lys-Gly) (interchain with G-Cter in SUMO2) cross-link. 3 C2H2-type zinc fingers span residues 706-728 (NECIICHRVLSCQSALKMHYRTH), 734-756 (FKCKICGRAFTTKGNLKTHYSVH), and 766-788 (HSCPICQKKFTNAVVLQQHIRMH). Disordered regions lie at residues 790–856 (GGQI…SSPL) and 894–963 (EGDV…LSPT). The segment covering 802-811 (YSESMESDTG) has biased composition (polar residues). Residues 820 to 833 (DLDNFSDENMEDCP) are compositionally biased toward acidic residues. Residues 843 to 856 (SADASQDSLSSSPL) are compositionally biased toward low complexity. Polar residues predominate over residues 899–936 (TNDSSSVGGDMESQSAGSPAISESTSSMQALSPSNSTQ). A compositionally biased stretch (basic and acidic residues) spans 937–949 (EFHKSPSIEEKPQ). 2 positions are modified to phosphoserine: Ser941 and Ser943. Glycyl lysine isopeptide (Lys-Gly) (interchain with G-Cter in SUMO2) cross-links involve residues Lys947 and Lys982. 2 C2H2-type zinc fingers span residues 1001–1023 (TACDICGKTFACQSALDIHYRSH) and 1029–1051 (FICTVCNRGFSTKGNLKQHMLTH). Lys1086 is covalently cross-linked (Glycyl lysine isopeptide (Lys-Gly) (interchain with G-Cter in SUMO2)). Residues 1095 to 1120 (VSPQDSKDTPTSHVPSGPLSSSATSP) form a disordered region. Residues 1105–1119 (TSHVPSGPLSSSATS) show a composition bias toward polar residues. C2H2-type zinc fingers lie at residues 1134–1156 (HYCNTCGKTFSSSSALQIHERTH) and 1162–1184 (FACTICGRAFTTKGNLKVHMGTH). Residues Lys1219, Lys1299, and Lys1319 each participate in a glycyl lysine isopeptide (Lys-Gly) (interchain with G-Cter in SUMO2) cross-link.

The protein belongs to the sal C2H2-type zinc-finger protein family. In terms of assembly, may associate with NuRD histone deacetylase complex (HDAC). Interacts with components of HDAC complex including HDAC1, HDAC2, RBBP4, RBPP7, MTA1 and MTA2. Interacts with CCNQ. Interacts with NSD2 (via PHD-type zinc fingers 1, 2 and 3). Highest levels in kidney. Lower levels in adult brain (enriched in corpus callosum, lower expression in substantia nigra) and liver.

Its subcellular location is the nucleus. In terms of biological role, transcriptional repressor involved in organogenesis. Plays an essential role in ureteric bud invasion during kidney development. The sequence is that of Sal-like protein 1 (SALL1) from Homo sapiens (Human).